Consider the following 240-residue polypeptide: Uridylate kinase (240 aa).

12–15 is a binding site for ATP; it reads KLSG. The involved in allosteric activation by GTP stretch occupies residues 20 to 25; sequence GEQGNG. Residue glycine 54 coordinates UMP. Positions 55 and 59 each coordinate ATP. UMP contacts are provided by residues aspartate 74 and 135–142; that span reads TGNPYFST. The ATP site is built by asparagine 163, tyrosine 169, and aspartate 172.

It belongs to the UMP kinase family. As to quaternary structure, homohexamer. Interacts with BrxC.

It localises to the cytoplasm. The enzyme catalyses UMP + ATP = UDP + ADP. The protein operates within pyrimidine metabolism; CTP biosynthesis via de novo pathway; UDP from UMP (UMPK route): step 1/1. Allosterically activated by GTP. Can also be activated by dGTP and 3'-anthraniloyl-2'-deoxyguanosine-5'-triphosphate (Ant-dGTP). Inhibited by UTP, 5-bromo-UTP and 5-iodo-UTP. Functionally, catalyzes the reversible phosphorylation of UMP to UDP, with ATP or dATP as the most efficient phosphate donors. Is also able to phosphorylate 5-fluoro-UMP and 6-aza-UMP. This is Uridylate kinase (pyrH) from Bacillus subtilis (strain 168).